Reading from the N-terminus, the 299-residue chain is MPVSQSWWQVEVHCDPLLEDLLYWRLSEAGGRGFVCESKAQGLQVHSYFPAELWEETIRDRLLQEINADAADLGLPTPSLSWQTLDEEDWSESWKRHWQPQELGDRFLIQPAWLEPEPSDRLLLQLDPGTAFGTGAHPTTQLCLEGLETVPVADKVIADVGCGSGILAIGALLLGAKQVYAVDTDPLAVGATQANAALNDLEGDRFWTAIGSADQLQPLHAQGVRFDGFLCNILAHIIQALTPTLSELASPGSWAIFSGLLTSQADTVSVTLEEYGWVIRDRASQGDWCRLVADFRPER.

The S-adenosyl-L-methionine site is built by Thr140, Gly161, Asp183, and Asn232.

Belongs to the methyltransferase superfamily. PrmA family.

It localises to the cytoplasm. The catalysed reaction is L-lysyl-[protein] + 3 S-adenosyl-L-methionine = N(6),N(6),N(6)-trimethyl-L-lysyl-[protein] + 3 S-adenosyl-L-homocysteine + 3 H(+). Functionally, methylates ribosomal protein L11. This chain is Ribosomal protein L11 methyltransferase, found in Synechococcus elongatus (strain ATCC 33912 / PCC 7942 / FACHB-805) (Anacystis nidulans R2).